The sequence spans 434 residues: MDYLDLGPYSSASGTVRLPGSKSISNRVLLLAALAEGETTITNLLDSDDTRVMLDALGTLGVKLARDGDTCVVTGTRGAFTAKTADLFLGNAGTAVRPLTAALAVNGGDYRVHGVPRMHERPIGDLVDGLRQIGAQIDYELNEGYPPLRIKPANISVDAPIRVRGDVSSQFLTALLMTLPLVKAKDGKIVVEVDGELISKPYIDITIRLMERFGVTVERDGWQRFVVPAGVRYRSPGRIMVEGDASSASYFLAAGALGGGPLRVEGVGRASIQGDVGFANALMQMGANVTMGDDWIDVRGIGHDHGKLEPIDMDFNLIPDAAMTIAVAALFANGTSTLRNIASWRVKETDRIAAMATELRKVGAIIEEGPDYLVVTPPEKLTPNAAIDTYDDHRMAMCFSLVSLGGVPVRINDPKCVGKTFPDYFDRFAALAKA.

Positions 22, 23, and 27 each coordinate 3-phosphoshikimate. K22 provides a ligand contact to phosphoenolpyruvate. The phosphoenolpyruvate site is built by G93 and R121. 6 residues coordinate 3-phosphoshikimate: S168, S169, Q170, S199, D320, and K347. Q170 contributes to the phosphoenolpyruvate binding site. Catalysis depends on D320, which acts as the Proton acceptor. Residues R351, R394, and K419 each contribute to the phosphoenolpyruvate site.

Belongs to the EPSP synthase family. As to quaternary structure, monomer.

Its subcellular location is the cytoplasm. The enzyme catalyses 3-phosphoshikimate + phosphoenolpyruvate = 5-O-(1-carboxyvinyl)-3-phosphoshikimate + phosphate. It participates in metabolic intermediate biosynthesis; chorismate biosynthesis; chorismate from D-erythrose 4-phosphate and phosphoenolpyruvate: step 6/7. Catalyzes the transfer of the enolpyruvyl moiety of phosphoenolpyruvate (PEP) to the 5-hydroxyl of shikimate-3-phosphate (S3P) to produce enolpyruvyl shikimate-3-phosphate and inorganic phosphate. The polypeptide is 3-phosphoshikimate 1-carboxyvinyltransferase (Burkholderia lata (strain ATCC 17760 / DSM 23089 / LMG 22485 / NCIMB 9086 / R18194 / 383)).